Reading from the N-terminus, the 1025-residue chain is Dihydropyrimidine dehydrogenase [NADP(+)] (1025 aa).

Residues 69–100 (ERGALREAVRCLKCADAPCQKSCPTSLDIKSF) form the 4Fe-4S ferredoxin-type 1 domain. Residues C79, C82, C87, and C91 each coordinate [4Fe-4S] cluster. V129 provides a ligand contact to FAD. Residues C130, C136, C140, and Q156 each coordinate [4Fe-4S] cluster. FAD-binding positions include 194–198 (GAGPA), 218–226 (EKQEYVGGL), and R235. NADP(+) is bound by residues 340–343 (AGDT), 364–365 (RK), and R371. An N6-acetyllysine modification is found at K384. Residues 437–439 (PFG) and 481–487 (DVVGMAN) each bind NADP(+). 480–489 (GDVVGMANTT) contacts FAD. FMN contacts are provided by residues S550 and 574–575 (KT). Residues N609 and 668–670 (NLS) contribute to the substrate site. The Proton acceptor role is filled by C671. K709 is a binding site for FMN. 736–737 (NT) contributes to the substrate binding site. Residues G767, 793 to 795 (TGG), and 816 to 817 (CS) each bind FMN. A Phosphoserine modification is found at S905. 4Fe-4S ferredoxin-type domains follow at residues 944-976 (VVAL…FDPE) and 978-1007 (HLPT…MVSR). Residues C953, C956, C959, C963, C986, C989, C992, and C996 each coordinate [4Fe-4S] cluster.

Belongs to the dihydropyrimidine dehydrogenase family. Homodimer. FAD serves as cofactor. It depends on FMN as a cofactor. Requires [4Fe-4S] cluster as cofactor.

It localises to the cytoplasm. The catalysed reaction is 5,6-dihydrouracil + NADP(+) = uracil + NADPH + H(+). It carries out the reaction 5,6-dihydrothymine + NADP(+) = thymine + NADPH + H(+). It functions in the pathway amino-acid biosynthesis; beta-alanine biosynthesis. Inactivated by 5-iodouracil. Functionally, involved in pyrimidine base degradation. Catalyzes the reduction of uracil and thymine. Also involved the degradation of the chemotherapeutic drug 5-fluorouracil. The sequence is that of Dihydropyrimidine dehydrogenase [NADP(+)] from Rattus norvegicus (Rat).